The primary structure comprises 776 residues: Endonuclease MutS2 (776 aa).

330–337 (GPNTGGKT) is an ATP binding site. Residues 701–776 (LDLRGMRYEE…GSGATIAILK (76 aa)) enclose the Smr domain.

Belongs to the DNA mismatch repair MutS family. MutS2 subfamily. As to quaternary structure, homodimer. Binds to stalled ribosomes, contacting rRNA.

Functionally, endonuclease that is involved in the suppression of homologous recombination and thus may have a key role in the control of bacterial genetic diversity. Its function is as follows. Acts as a ribosome collision sensor, splitting the ribosome into its 2 subunits. Detects stalled/collided 70S ribosomes which it binds and splits by an ATP-hydrolysis driven conformational change. Acts upstream of the ribosome quality control system (RQC), a ribosome-associated complex that mediates the extraction of incompletely synthesized nascent chains from stalled ribosomes and their subsequent degradation. Probably generates substrates for RQC. This Lactococcus lactis subsp. cremoris (strain SK11) protein is Endonuclease MutS2.